Reading from the N-terminus, the 240-residue chain is Phosphatidylserine decarboxylase proenzyme (240 aa).

Residue S198 is the Schiff-base intermediate with substrate; via pyruvic acid of the active site. The residue at position 198 (S198) is a Pyruvic acid (Ser); by autocatalysis.

The protein belongs to the phosphatidylserine decarboxylase family. PSD-A subfamily. As to quaternary structure, heterodimer of a large membrane-associated beta subunit and a small pyruvoyl-containing alpha subunit. Requires pyruvate as cofactor. Post-translationally, is synthesized initially as an inactive proenzyme. Formation of the active enzyme involves a self-maturation process in which the active site pyruvoyl group is generated from an internal serine residue via an autocatalytic post-translational modification. Two non-identical subunits are generated from the proenzyme in this reaction, and the pyruvate is formed at the N-terminus of the alpha chain, which is derived from the carboxyl end of the proenzyme. The post-translation cleavage follows an unusual pathway, termed non-hydrolytic serinolysis, in which the side chain hydroxyl group of the serine supplies its oxygen atom to form the C-terminus of the beta chain, while the remainder of the serine residue undergoes an oxidative deamination to produce ammonia and the pyruvoyl prosthetic group on the alpha chain.

It is found in the cell membrane. It catalyses the reaction a 1,2-diacyl-sn-glycero-3-phospho-L-serine + H(+) = a 1,2-diacyl-sn-glycero-3-phosphoethanolamine + CO2. The protein operates within phospholipid metabolism; phosphatidylethanolamine biosynthesis; phosphatidylethanolamine from CDP-diacylglycerol: step 2/2. Functionally, catalyzes the formation of phosphatidylethanolamine (PtdEtn) from phosphatidylserine (PtdSer). The protein is Phosphatidylserine decarboxylase proenzyme of Paramagnetospirillum magneticum (strain ATCC 700264 / AMB-1) (Magnetospirillum magneticum).